Reading from the N-terminus, the 74-residue chain is uncharacterized protein (74 aa).

This is an uncharacterized protein from Enterobacteria phage T4 (Bacteriophage T4).